Consider the following 804-residue polypeptide: Leucine--tRNA ligase (804 aa).

The 'HIGH' region signature appears at 40-51 (PYPSGAGLHVGH). Positions 576–580 (KMSKS) match the 'KMSKS' region motif. Lys579 provides a ligand contact to ATP.

The protein belongs to the class-I aminoacyl-tRNA synthetase family.

The protein localises to the cytoplasm. It catalyses the reaction tRNA(Leu) + L-leucine + ATP = L-leucyl-tRNA(Leu) + AMP + diphosphate. This is Leucine--tRNA ligase from Staphylococcus aureus (strain bovine RF122 / ET3-1).